The primary structure comprises 214 residues: Thymidylate kinase (214 aa).

9–16 is an ATP binding site; it reads GVDGSGKS.

It belongs to the thymidylate kinase family.

It catalyses the reaction dTMP + ATP = dTDP + ADP. Functionally, phosphorylation of dTMP to form dTDP in both de novo and salvage pathways of dTTP synthesis. The sequence is that of Thymidylate kinase from Symbiobacterium thermophilum (strain DSM 24528 / JCM 14929 / IAM 14863 / T).